The following is an 814-amino-acid chain: DNA ligase (814 aa).

NAD(+)-binding positions include 46-50, 95-96, and Glu129; these read DAEYD and SL. Catalysis depends on Lys131, which acts as the N6-AMP-lysine intermediate. Residues Arg152, Glu189, Lys305, and Lys329 each coordinate NAD(+). Zn(2+)-binding residues include Cys434, Cys437, Cys458, and Cys464. The interval 525–548 is disordered; sequence LSAQRRSEGEPAPKKPTKKKGEEE. The 80-residue stretch at 735 to 814 folds into the BRCT domain; it reads TSAAAFAGKT…DDWLAMLAEA (80 aa).

The protein belongs to the NAD-dependent DNA ligase family. LigA subfamily. Mg(2+) serves as cofactor. The cofactor is Mn(2+).

The enzyme catalyses NAD(+) + (deoxyribonucleotide)n-3'-hydroxyl + 5'-phospho-(deoxyribonucleotide)m = (deoxyribonucleotide)n+m + AMP + beta-nicotinamide D-nucleotide.. Its function is as follows. DNA ligase that catalyzes the formation of phosphodiester linkages between 5'-phosphoryl and 3'-hydroxyl groups in double-stranded DNA using NAD as a coenzyme and as the energy source for the reaction. It is essential for DNA replication and repair of damaged DNA. This chain is DNA ligase, found in Methylorubrum extorquens (strain PA1) (Methylobacterium extorquens).